The primary structure comprises 149 residues: D-aminoacyl-tRNA deacylase (149 aa).

The Gly-cisPro motif, important for rejection of L-amino acids motif lies at 137–138 (GP).

It belongs to the DTD family. As to quaternary structure, homodimer.

The protein localises to the cytoplasm. It carries out the reaction glycyl-tRNA(Ala) + H2O = tRNA(Ala) + glycine + H(+). The catalysed reaction is a D-aminoacyl-tRNA + H2O = a tRNA + a D-alpha-amino acid + H(+). Its function is as follows. An aminoacyl-tRNA editing enzyme that deacylates mischarged D-aminoacyl-tRNAs. Also deacylates mischarged glycyl-tRNA(Ala), protecting cells against glycine mischarging by AlaRS. Acts via tRNA-based rather than protein-based catalysis; rejects L-amino acids rather than detecting D-amino acids in the active site. By recycling D-aminoacyl-tRNA to D-amino acids and free tRNA molecules, this enzyme counteracts the toxicity associated with the formation of D-aminoacyl-tRNA entities in vivo and helps enforce protein L-homochirality. This Herminiimonas arsenicoxydans protein is D-aminoacyl-tRNA deacylase.